Here is a 208-residue protein sequence, read N- to C-terminus: ATP-dependent Clp protease proteolytic subunit (208 aa).

Ser-107 (nucleophile) is an active-site residue. The active site involves His-132.

Belongs to the peptidase S14 family. Fourteen ClpP subunits assemble into 2 heptameric rings which stack back to back to give a disk-like structure with a central cavity, resembling the structure of eukaryotic proteasomes.

Its subcellular location is the cytoplasm. The enzyme catalyses Hydrolysis of proteins to small peptides in the presence of ATP and magnesium. alpha-casein is the usual test substrate. In the absence of ATP, only oligopeptides shorter than five residues are hydrolyzed (such as succinyl-Leu-Tyr-|-NHMec, and Leu-Tyr-Leu-|-Tyr-Trp, in which cleavage of the -Tyr-|-Leu- and -Tyr-|-Trp bonds also occurs).. In terms of biological role, cleaves peptides in various proteins in a process that requires ATP hydrolysis. Has a chymotrypsin-like activity. Plays a major role in the degradation of misfolded proteins. The polypeptide is ATP-dependent Clp protease proteolytic subunit (Methylorubrum extorquens (strain CM4 / NCIMB 13688) (Methylobacterium extorquens)).